Consider the following 373-residue polypeptide: UDP-N-acetylglucosamine--N-acetylmuramyl-(pentapeptide) pyrophosphoryl-undecaprenol N-acetylglucosamine transferase (373 aa).

UDP-N-acetyl-alpha-D-glucosamine is bound by residues 13–15 (TGG), Asn-124, Arg-164, Ser-192, and Gln-293.

The protein belongs to the glycosyltransferase 28 family. MurG subfamily.

It localises to the cell inner membrane. The enzyme catalyses di-trans,octa-cis-undecaprenyl diphospho-N-acetyl-alpha-D-muramoyl-L-alanyl-D-glutamyl-meso-2,6-diaminopimeloyl-D-alanyl-D-alanine + UDP-N-acetyl-alpha-D-glucosamine = di-trans,octa-cis-undecaprenyl diphospho-[N-acetyl-alpha-D-glucosaminyl-(1-&gt;4)]-N-acetyl-alpha-D-muramoyl-L-alanyl-D-glutamyl-meso-2,6-diaminopimeloyl-D-alanyl-D-alanine + UDP + H(+). It participates in cell wall biogenesis; peptidoglycan biosynthesis. In terms of biological role, cell wall formation. Catalyzes the transfer of a GlcNAc subunit on undecaprenyl-pyrophosphoryl-MurNAc-pentapeptide (lipid intermediate I) to form undecaprenyl-pyrophosphoryl-MurNAc-(pentapeptide)GlcNAc (lipid intermediate II). This Allorhizobium ampelinum (strain ATCC BAA-846 / DSM 112012 / S4) (Agrobacterium vitis (strain S4)) protein is UDP-N-acetylglucosamine--N-acetylmuramyl-(pentapeptide) pyrophosphoryl-undecaprenol N-acetylglucosamine transferase.